The following is a 334-amino-acid chain: Methionyl-tRNA formyltransferase (334 aa).

Residue 111-114 (SILP) coordinates (6S)-5,6,7,8-tetrahydrofolate.

It belongs to the Fmt family.

The catalysed reaction is L-methionyl-tRNA(fMet) + (6R)-10-formyltetrahydrofolate = N-formyl-L-methionyl-tRNA(fMet) + (6S)-5,6,7,8-tetrahydrofolate + H(+). Its function is as follows. Attaches a formyl group to the free amino group of methionyl-tRNA(fMet). The formyl group appears to play a dual role in the initiator identity of N-formylmethionyl-tRNA by promoting its recognition by IF2 and preventing the misappropriation of this tRNA by the elongation apparatus. The chain is Methionyl-tRNA formyltransferase from Trichormus variabilis (strain ATCC 29413 / PCC 7937) (Anabaena variabilis).